Here is a 122-residue protein sequence, read N- to C-terminus: Small ribosomal subunit protein uS12 (122 aa).

The interval 1 to 24 (MPTINQLIRKKRKSTGKKRTAPAL) is disordered. The segment covering 8–20 (IRKKRKSTGKKRT) has biased composition (basic residues). Aspartate 89 is modified (3-methylthioaspartic acid).

The protein belongs to the universal ribosomal protein uS12 family. As to quaternary structure, part of the 30S ribosomal subunit. Contacts proteins S8 and S17. May interact with IF1 in the 30S initiation complex.

Its function is as follows. With S4 and S5 plays an important role in translational accuracy. Functionally, interacts with and stabilizes bases of the 16S rRNA that are involved in tRNA selection in the A site and with the mRNA backbone. Located at the interface of the 30S and 50S subunits, it traverses the body of the 30S subunit contacting proteins on the other side and probably holding the rRNA structure together. The combined cluster of proteins S8, S12 and S17 appears to hold together the shoulder and platform of the 30S subunit. This Natranaerobius thermophilus (strain ATCC BAA-1301 / DSM 18059 / JW/NM-WN-LF) protein is Small ribosomal subunit protein uS12.